The chain runs to 618 residues: Auxin efflux carrier component 3a (618 aa).

Residues 1–6 (MISGHD) lie on the Extracellular side of the membrane. The helical transmembrane segment at 7–27 (FYTVMAAVVPLYVAMFLAYGS) threads the bilayer. Residues 28-38 (VRWWGIFTPDQ) are Cytoplasmic-facing. The chain crosses the membrane as a helical span at residues 39 to 59 (CSGINRFVAIFAVPLLSFHFI). Residue V51 participates in (indol-3-yl)acetate binding. The Extracellular segment spans residues 60–70 (STNDPYAMNLR). A helical transmembrane segment spans residues 71-90 (FLAADTLQKLLVLAGLAAWS). At 91 to 104 (RLPSRTGAPRLDWS) the chain is on the cytoplasmic side. A helical membrane pass occupies residues 105–125 (ITLFSLSTLPNTLVMGIPLLI). Positions 115 and 117 each coordinate (indol-3-yl)acetate. The Extracellular segment spans residues 126–134 (AMYGPYSGS). Residues 135–155 (LMVQIVVLQCIIWYTLMLFLF) form a helical membrane-spanning segment. Residue Y148 coordinates (indol-3-yl)acetate. At 156 to 478 (EFRAARMLIA…LIRNPNTYSS (323 aa)) the chain is on the cytoplasmic side. Over residues 281–293 (SLQSSRGPTPRQS) the composition is skewed to polar residues. A disordered region spans residues 281 to 312 (SLQSSRGPTPRQSNFDEHSARPPKPPATTTGA). Residues 479-499 (LLGLAWSLVAFRWHVSMPAIV) traverse the membrane as a helical segment. The Extracellular segment spans residues 500–502 (EKS). A helical membrane pass occupies residues 503–523 (ISILSDAGLGMAMFSLGLFMA). Topologically, residues 524 to 539 (LQPSIIACGKSAAVVS) are cytoplasmic. A helical membrane pass occupies residues 540 to 560 (MAVRFLAGPAVMAAASIAIGL). Over 561–563 (RGT) the chain is Extracellular. A helical transmembrane segment spans residues 564–584 (LLHVAIVQAALPQGIVPFVFA). Residues I578 and V579 each contribute to the (indol-3-yl)acetate site. The Cytoplasmic portion of the chain corresponds to 585 to 597 (KEYNVHPAILSTA). The chain crosses the membrane as a helical span at residues 598–618 (VIFGMLIALPITLLYYILLGL).

The protein belongs to the auxin efflux carrier (TC 2.A.69.1) family. In terms of assembly, homodimer. Expressed in coleoptiles, roots, vascular bundles of leaves, shoots, lamina joints and vascular bundles of the lemma and filament. Expressed in stem bases, stems, leaves and young panicles.

Its subcellular location is the cell membrane. Functionally, acts as a component of the auxin efflux carrier. Involved in the polar auxin transport which may regulate crown root development and response to water stress. This chain is Auxin efflux carrier component 3a, found in Oryza sativa subsp. japonica (Rice).